A 355-amino-acid polypeptide reads, in one-letter code: 3-isopropylmalate dehydrogenase (355 aa).

Substrate-binding residues include arginine 90, arginine 100, arginine 128, and aspartate 222. Positions 222, 246, and 250 each coordinate Mg(2+). An NAD(+)-binding site is contributed by glycine 280–asparagine 292.

The protein belongs to the isocitrate and isopropylmalate dehydrogenases family. LeuB type 1 subfamily. Homodimer. Requires Mg(2+) as cofactor. The cofactor is Mn(2+).

It is found in the cytoplasm. It carries out the reaction (2R,3S)-3-isopropylmalate + NAD(+) = 4-methyl-2-oxopentanoate + CO2 + NADH. The protein operates within amino-acid biosynthesis; L-leucine biosynthesis; L-leucine from 3-methyl-2-oxobutanoate: step 3/4. Its function is as follows. Catalyzes the oxidation of 3-carboxy-2-hydroxy-4-methylpentanoate (3-isopropylmalate) to 3-carboxy-4-methyl-2-oxopentanoate. The product decarboxylates to 4-methyl-2 oxopentanoate. In Burkholderia multivorans (strain ATCC 17616 / 249), this protein is 3-isopropylmalate dehydrogenase.